The sequence spans 547 residues: Chaperonin GroEL (547 aa).

Residues threonine 30–proline 33, lysine 51, aspartate 87–threonine 91, glycine 415, asparagine 479–alanine 481, and aspartate 495 contribute to the ATP site.

This sequence belongs to the chaperonin (HSP60) family. Forms a cylinder of 14 subunits composed of two heptameric rings stacked back-to-back. Interacts with the co-chaperonin GroES.

It is found in the cytoplasm. It carries out the reaction ATP + H2O + a folded polypeptide = ADP + phosphate + an unfolded polypeptide.. Its function is as follows. Together with its co-chaperonin GroES, plays an essential role in assisting protein folding. The GroEL-GroES system forms a nano-cage that allows encapsulation of the non-native substrate proteins and provides a physical environment optimized to promote and accelerate protein folding. In Pseudomonas savastanoi pv. phaseolicola (strain 1448A / Race 6) (Pseudomonas syringae pv. phaseolicola (strain 1448A / Race 6)), this protein is Chaperonin GroEL.